A 276-amino-acid chain; its full sequence is Krueppel homolog 2 (276 aa).

Positions 1-37 (MSAPTDQPPRSEGAQTNSSERSSQQQEQPQQSQSQNV) are disordered. Residues 18 to 35 (SSERSSQQQEQPQQSQSQ) show a composition bias toward low complexity. Serine 22 bears the Phosphoserine mark. 3 helical membrane-spanning segments follow: residues 53 to 73 (ALWALRLLVIFFTVSYVLPIF), 125 to 145 (LIFFNIRPSLLVLIPVLLYSV), and 181 to 201 (ILKATAFCEIFIMPYAIVLAF).

The protein belongs to the PER33/POM33 family.

The protein localises to the membrane. Member of the dosage-dependent hierarchy effective upon white gene expression. This Drosophila melanogaster (Fruit fly) protein is Krueppel homolog 2 (Kr-h2).